The following is a 120-amino-acid chain: Protein FAM241B (120 aa).

The segment at 12–59 is disordered; the sequence is QDDDPRVRTTTQHRSSSSQQGFFNRGHGAPPGGPGPRQQQAGARLGAA. Low complexity-rich tracts occupy residues 19 to 39 and 47 to 59; these read RTTT…RGHG and PRQQ…LGAA. The residue at position 61 (S61) is a Phosphoserine. Residues 91-111 form a helical membrane-spanning segment; sequence ILLLFLLMMLGVRGLLLVGLV.

It belongs to the FAM241 family.

Its subcellular location is the membrane. Functionally, may play a role in lysosome homeostasis. This chain is Protein FAM241B, found in Mus musculus (Mouse).